Consider the following 115-residue polypeptide: Large ribosomal subunit protein bL19 (115 aa).

It belongs to the bacterial ribosomal protein bL19 family.

In terms of biological role, this protein is located at the 30S-50S ribosomal subunit interface and may play a role in the structure and function of the aminoacyl-tRNA binding site. The sequence is that of Large ribosomal subunit protein bL19 from Leifsonia xyli subsp. xyli (strain CTCB07).